The sequence spans 307 residues: Ribosomal protein L11 methyltransferase (307 aa).

S-adenosyl-L-methionine is bound by residues Thr-162, Gly-183, Asp-205, and Asn-244.

This sequence belongs to the methyltransferase superfamily. PrmA family.

The protein resides in the cytoplasm. The enzyme catalyses L-lysyl-[protein] + 3 S-adenosyl-L-methionine = N(6),N(6),N(6)-trimethyl-L-lysyl-[protein] + 3 S-adenosyl-L-homocysteine + 3 H(+). Methylates ribosomal protein L11. This Bordetella parapertussis (strain 12822 / ATCC BAA-587 / NCTC 13253) protein is Ribosomal protein L11 methyltransferase.